The following is a 413-amino-acid chain: Serine hydroxymethyltransferase (413 aa).

(6S)-5,6,7,8-tetrahydrofolate contacts are provided by residues leucine 119 and 123–125 (GHL). Lysine 228 carries the post-translational modification N6-(pyridoxal phosphate)lysine. 351–353 (SPF) provides a ligand contact to (6S)-5,6,7,8-tetrahydrofolate.

Belongs to the SHMT family. As to quaternary structure, homodimer. Requires pyridoxal 5'-phosphate as cofactor.

It is found in the cytoplasm. It carries out the reaction (6R)-5,10-methylene-5,6,7,8-tetrahydrofolate + glycine + H2O = (6S)-5,6,7,8-tetrahydrofolate + L-serine. Its pathway is one-carbon metabolism; tetrahydrofolate interconversion. It functions in the pathway amino-acid biosynthesis; glycine biosynthesis; glycine from L-serine: step 1/1. Catalyzes the reversible interconversion of serine and glycine with tetrahydrofolate (THF) serving as the one-carbon carrier. This reaction serves as the major source of one-carbon groups required for the biosynthesis of purines, thymidylate, methionine, and other important biomolecules. Also exhibits THF-independent aldolase activity toward beta-hydroxyamino acids, producing glycine and aldehydes, via a retro-aldol mechanism. In Clostridium botulinum (strain 657 / Type Ba4), this protein is Serine hydroxymethyltransferase.